Here is a 628-residue protein sequence, read N- to C-terminus: Biosynthetic arginine decarboxylase (628 aa).

Position 99 is an N6-(pyridoxal phosphate)lysine (lysine 99). 279–289 (VDVGGGLGIDY) is a binding site for substrate.

Belongs to the Orn/Lys/Arg decarboxylase class-II family. SpeA subfamily. It depends on Mg(2+) as a cofactor. Pyridoxal 5'-phosphate serves as cofactor.

The enzyme catalyses L-arginine + H(+) = agmatine + CO2. Its function is as follows. Catalyzes the biosynthesis of agmatine from arginine. This chain is Biosynthetic arginine decarboxylase, found in Xanthomonas campestris pv. campestris (strain ATCC 33913 / DSM 3586 / NCPPB 528 / LMG 568 / P 25).